The primary structure comprises 427 residues: Glutamate-1-semialdehyde 2,1-aminomutase (427 aa).

An N6-(pyridoxal phosphate)lysine modification is found at lysine 265.

This sequence belongs to the class-III pyridoxal-phosphate-dependent aminotransferase family. HemL subfamily. In terms of assembly, homodimer. Pyridoxal 5'-phosphate serves as cofactor.

It is found in the cytoplasm. It carries out the reaction (S)-4-amino-5-oxopentanoate = 5-aminolevulinate. It functions in the pathway porphyrin-containing compound metabolism; protoporphyrin-IX biosynthesis; 5-aminolevulinate from L-glutamyl-tRNA(Glu): step 2/2. This is Glutamate-1-semialdehyde 2,1-aminomutase from Burkholderia cenocepacia (strain ATCC BAA-245 / DSM 16553 / LMG 16656 / NCTC 13227 / J2315 / CF5610) (Burkholderia cepacia (strain J2315)).